A 456-amino-acid chain; its full sequence is UDP-glycosyltransferase 74D1 (456 aa).

Residues serine 279, serine 332–glutamine 334, histidine 349–glutamate 357, and tyrosine 371–glutamine 374 contribute to the UDP-alpha-D-glucose site.

The protein belongs to the UDP-glycosyltransferase family. As to expression, expressed in leaves.

In terms of biological role, glucosyltransferase that glucosylates jasmonate (JA) and JA derivatives. Also active on indole-3-acetic acid (IAA), 4-coumrate, cinnamate and caffeate. The polypeptide is UDP-glycosyltransferase 74D1 (UGT74D1) (Arabidopsis thaliana (Mouse-ear cress)).